We begin with the raw amino-acid sequence, 544 residues long: Protein anon-37Cs (544 aa).

Its subcellular location is the cytoplasm. In terms of biological role, has a non-vital function. In Drosophila lebanonensis (Fruit fly), this protein is Protein anon-37Cs (anon-37Cs).